Consider the following 234-residue polypeptide: Thiamine-phosphate synthase (234 aa).

4-amino-2-methyl-5-(diphosphooxymethyl)pyrimidine is bound by residues 65–69 (QYRNK) and Asn-97. Positions 98 and 117 each coordinate Mg(2+). Residue Ser-136 coordinates 4-amino-2-methyl-5-(diphosphooxymethyl)pyrimidine. Position 163–165 (163–165 (SHT)) interacts with 2-[(2R,5Z)-2-carboxy-4-methylthiazol-5(2H)-ylidene]ethyl phosphate. Lys-166 lines the 4-amino-2-methyl-5-(diphosphooxymethyl)pyrimidine pocket. Residues Gly-192 and 212 to 213 (IS) contribute to the 2-[(2R,5Z)-2-carboxy-4-methylthiazol-5(2H)-ylidene]ethyl phosphate site.

This sequence belongs to the thiamine-phosphate synthase family. The cofactor is Mg(2+).

It catalyses the reaction 2-[(2R,5Z)-2-carboxy-4-methylthiazol-5(2H)-ylidene]ethyl phosphate + 4-amino-2-methyl-5-(diphosphooxymethyl)pyrimidine + 2 H(+) = thiamine phosphate + CO2 + diphosphate. It carries out the reaction 2-(2-carboxy-4-methylthiazol-5-yl)ethyl phosphate + 4-amino-2-methyl-5-(diphosphooxymethyl)pyrimidine + 2 H(+) = thiamine phosphate + CO2 + diphosphate. The catalysed reaction is 4-methyl-5-(2-phosphooxyethyl)-thiazole + 4-amino-2-methyl-5-(diphosphooxymethyl)pyrimidine + H(+) = thiamine phosphate + diphosphate. It participates in cofactor biosynthesis; thiamine diphosphate biosynthesis; thiamine phosphate from 4-amino-2-methyl-5-diphosphomethylpyrimidine and 4-methyl-5-(2-phosphoethyl)-thiazole: step 1/1. In terms of biological role, condenses 4-methyl-5-(beta-hydroxyethyl)thiazole monophosphate (THZ-P) and 2-methyl-4-amino-5-hydroxymethyl pyrimidine pyrophosphate (HMP-PP) to form thiamine monophosphate (TMP). The sequence is that of Thiamine-phosphate synthase from Xylella fastidiosa (strain 9a5c).